Consider the following 209-residue polypeptide: Imidazole glycerol phosphate synthase subunit HisH (209 aa).

In terms of domain architecture, Glutamine amidotransferase type-1 spans 5 to 209 (AIAIIDYDMG…LRNFVALVKD (205 aa)). The Nucleophile role is filled by C83. Residues H188 and E190 contribute to the active site.

As to quaternary structure, heterodimer of HisH and HisF.

It is found in the cytoplasm. The catalysed reaction is 5-[(5-phospho-1-deoxy-D-ribulos-1-ylimino)methylamino]-1-(5-phospho-beta-D-ribosyl)imidazole-4-carboxamide + L-glutamine = D-erythro-1-(imidazol-4-yl)glycerol 3-phosphate + 5-amino-1-(5-phospho-beta-D-ribosyl)imidazole-4-carboxamide + L-glutamate + H(+). The enzyme catalyses L-glutamine + H2O = L-glutamate + NH4(+). The protein operates within amino-acid biosynthesis; L-histidine biosynthesis; L-histidine from 5-phospho-alpha-D-ribose 1-diphosphate: step 5/9. Its function is as follows. IGPS catalyzes the conversion of PRFAR and glutamine to IGP, AICAR and glutamate. The HisH subunit catalyzes the hydrolysis of glutamine to glutamate and ammonia as part of the synthesis of IGP and AICAR. The resulting ammonia molecule is channeled to the active site of HisF. This Thermosynechococcus vestitus (strain NIES-2133 / IAM M-273 / BP-1) protein is Imidazole glycerol phosphate synthase subunit HisH.